A 265-amino-acid chain; its full sequence is 5'-nucleotidase SurE (265 aa).

Positions 12, 13, 43, and 91 each coordinate a divalent metal cation.

This sequence belongs to the SurE nucleotidase family. It depends on a divalent metal cation as a cofactor.

The protein resides in the cytoplasm. It carries out the reaction a ribonucleoside 5'-phosphate + H2O = a ribonucleoside + phosphate. Functionally, nucleotidase that shows phosphatase activity on nucleoside 5'-monophosphates. The chain is 5'-nucleotidase SurE from Haloquadratum walsbyi (strain DSM 16790 / HBSQ001).